A 212-amino-acid chain; its full sequence is Pyridoxine/pyridoxamine 5'-phosphate oxidase (212 aa).

Residues 8 to 11 (RREY) and lysine 66 each bind substrate. FMN contacts are provided by residues 61–66 (RIVLLK), 76–77 (FT), arginine 82, lysine 83, and glutamine 105. Substrate is bound by residues tyrosine 123, arginine 127, and serine 131. FMN is bound by residues 140-141 (QS) and tryptophan 185. A substrate-binding site is contributed by 191–193 (RLH). Residue arginine 195 participates in FMN binding.

This sequence belongs to the pyridoxamine 5'-phosphate oxidase family. Homodimer. It depends on FMN as a cofactor.

The enzyme catalyses pyridoxamine 5'-phosphate + O2 + H2O = pyridoxal 5'-phosphate + H2O2 + NH4(+). The catalysed reaction is pyridoxine 5'-phosphate + O2 = pyridoxal 5'-phosphate + H2O2. It functions in the pathway cofactor metabolism; pyridoxal 5'-phosphate salvage; pyridoxal 5'-phosphate from pyridoxamine 5'-phosphate: step 1/1. Its pathway is cofactor metabolism; pyridoxal 5'-phosphate salvage; pyridoxal 5'-phosphate from pyridoxine 5'-phosphate: step 1/1. In terms of biological role, catalyzes the oxidation of either pyridoxine 5'-phosphate (PNP) or pyridoxamine 5'-phosphate (PMP) into pyridoxal 5'-phosphate (PLP). The sequence is that of Pyridoxine/pyridoxamine 5'-phosphate oxidase from Shewanella sp. (strain W3-18-1).